Here is a 478-residue protein sequence, read N- to C-terminus: Alpha,alpha-trehalose-phosphate synthase [UDP-forming] (478 aa).

Residues Y89 and D143 each coordinate D-glucose 6-phosphate. Positions 280 and 285 each coordinate UDP. The UDP-alpha-D-glucose site is built by R280 and K285. R318 is a D-glucose 6-phosphate binding site. UDP-binding positions include I357 and 383–387 (LVSYE). UDP-alpha-D-glucose contacts are provided by residues I357 and 379–387 (DGMNLVSYE).

This sequence belongs to the glycosyltransferase 20 family.

The enzyme catalyses D-glucose 6-phosphate + UDP-alpha-D-glucose = alpha,alpha-trehalose 6-phosphate + UDP + H(+). Its pathway is carbohydrate biosynthesis. With respect to regulation, inhibited by validoxylamine A, a non-reactive trehalose analog. Its function is as follows. Synthase catalytic subunit of the trehalose synthase complex that catalyzes the production of trehalose from glucose-6-phosphate and UDP-alpha-D-glucose in a two step process. The polypeptide is Alpha,alpha-trehalose-phosphate synthase [UDP-forming] (Candida albicans (strain SC5314 / ATCC MYA-2876) (Yeast)).